Consider the following 132-residue polypeptide: Tumor suppressor ARF (132 aa).

An interaction with CDK5RAP3 and MDM2 region spans residues 1–64 (MVRRFLVTLR…LGQQPLPRRP (64 aa)). Residues 56–132 (GQQPLPRRPG…CLGPSARGPG (77 aa)) form a disordered region. Positions 71–83 (RPSGGAAAAPRRG) are enriched in low complexity. The span at 84 to 99 (AQLRRPRHSHPTRARR) shows a compositional bias: basic residues. Residues 103 to 117 (GLPGHAGGAAPGRGA) are compositionally biased toward gly residues.

Does not interact with cyclins, CDK1, CDK2, CDK4, CDK5 or CDK6. Binds to BCL6, E2F1, HUWE1, MDM2, MYC, NPM1/B23, TOP1/TOPOI and UBE2I/UBC9. Interacts with TBRG1 and COMMD1. Interacts with CDKN2AIP and E4F1. Interacts with CDK5RAP3 and MDM2; form a ternary complex involved in regulation of p53/TP53. Interacts with NOP53; the interaction is direct and promotes ARF nucleoplasmic relocalization and ubiquitin-mediated proteasomal degradation. Interacts with TTF1 (via the N-terminal region (NRD) and a C-terminal region); the interaction is direct and inhibits the nucleolar localization of TTF1. In terms of assembly, interacts with C1QBP. Ubiquitinated in normal cells by TRIP12 via the ubiquitin fusion degradation (UFD) pathway, a process that mediates ubiquitination at the N-terminus, regardless of the absence of lysine residues. Ubiquitination leads to its proteasomal degradation. In cancer cells, however, TRIP12 is located in a different cell compartment, preventing ubiquitination and degradation.

Its subcellular location is the nucleus. It localises to the nucleolus. The protein localises to the nucleoplasm. The protein resides in the mitochondrion. Capable of inducing cell cycle arrest in G1 and G2 phases. Acts as a tumor suppressor. Binds to MDM2 and blocks its nucleocytoplasmic shuttling by sequestering it in the nucleolus. This inhibits the oncogenic action of MDM2 by blocking MDM2-induced degradation of p53 and enhancing p53-dependent transactivation and apoptosis. Also induces G2 arrest and apoptosis in a p53-independent manner by preventing the activation of cyclin B1/CDC2 complexes. Binds to BCL6 and down-regulates BCL6-induced transcriptional repression. Binds to E2F1 and MYC and blocks their transcriptional activator activity but has no effect on MYC transcriptional repression. Binds to TOP1/TOPOI and stimulates its activity. This complex binds to rRNA gene promoters and may play a role in rRNA transcription and/or maturation. Interacts with NPM1/B23 and promotes its polyubiquitination and degradation, thus inhibiting rRNA processing. Plays a role in inhibiting ribosome biogenesis, perhaps by binding to the nucleolar localization sequence of transcription termination factor TTF1, and thereby preventing nucleolar localization of TTF1. Interacts with COMMD1 and promotes its 'Lys63'-linked polyubiquitination. Interacts with UBE2I/UBC9 and enhances sumoylation of a number of its binding partners including MDM2 and E2F1. Binds to HUWE1 and represses its ubiquitin ligase activity. May play a role in controlling cell proliferation and apoptosis during mammary gland development. Functionally, may be involved in regulation of autophagy and caspase-independent cell death; the short-lived mitochondrial isoform is stabilized by C1QBP. The polypeptide is Tumor suppressor ARF (Homo sapiens (Human)).